The primary structure comprises 542 residues: CTP synthase (542 aa).

Residues 1-265 form an amidoligase domain region; that stretch reads MARYVFITGG…DSEVLSAFGI (265 aa). Ser13 is a binding site for CTP. UTP is bound at residue Ser13. An ATP-binding site is contributed by 14–19; the sequence is SLGKGI. Residue Tyr54 participates in L-glutamine binding. Asp71 is an ATP binding site. Positions 71 and 139 each coordinate Mg(2+). Residues 146–148, 186–191, and Lys222 each bind CTP; these read DIE and KTKPTQ. UTP-binding positions include 186–191 and Lys222; that span reads KTKPTQ. Positions 291 to 541 constitute a Glutamine amidotransferase type-1 domain; that stretch reads TIAVVGKYTG…IEAAIEQSRL (251 aa). Gly353 is an L-glutamine binding site. Cys380 serves as the catalytic Nucleophile; for glutamine hydrolysis. L-glutamine contacts are provided by residues 381-384, Glu404, and Arg469; that span reads FGMQ. Catalysis depends on residues His514 and Glu516.

The protein belongs to the CTP synthase family. Homotetramer.

It carries out the reaction UTP + L-glutamine + ATP + H2O = CTP + L-glutamate + ADP + phosphate + 2 H(+). The catalysed reaction is L-glutamine + H2O = L-glutamate + NH4(+). It catalyses the reaction UTP + NH4(+) + ATP = CTP + ADP + phosphate + 2 H(+). Its pathway is pyrimidine metabolism; CTP biosynthesis via de novo pathway; CTP from UDP: step 2/2. Its activity is regulated as follows. Allosterically activated by GTP, when glutamine is the substrate; GTP has no effect on the reaction when ammonia is the substrate. The allosteric effector GTP functions by stabilizing the protein conformation that binds the tetrahedral intermediate(s) formed during glutamine hydrolysis. Inhibited by the product CTP, via allosteric rather than competitive inhibition. Functionally, catalyzes the ATP-dependent amination of UTP to CTP with either L-glutamine or ammonia as the source of nitrogen. Regulates intracellular CTP levels through interactions with the four ribonucleotide triphosphates. This chain is CTP synthase, found in Brucella canis (strain ATCC 23365 / NCTC 10854 / RM-666).